The sequence spans 112 residues: Ferredoxin-2 (112 aa).

2 consecutive 4Fe-4S ferredoxin-type domains span residues 2-30 (TYVV…YEGE) and 31-60 (NTLV…PDTE). [3Fe-4S] cluster contacts are provided by cysteine 9 and cysteine 17. 4 residues coordinate [4Fe-4S] cluster: cysteine 21, cysteine 40, cysteine 43, and cysteine 46. Cysteine 50 contributes to the [3Fe-4S] cluster binding site. Over residues 85 to 103 (DPMPDHKKYDGETGKREKY) the composition is skewed to basic and acidic residues. The tract at residues 85–112 (DPMPDHKKYDGETGKREKYFSPNPGTGD) is disordered.

The cofactor is [4Fe-4S] cluster. It depends on [3Fe-4S] cluster as a cofactor.

Ferredoxins are iron-sulfur proteins that transfer electrons in a wide variety of metabolic reactions. The protein is Ferredoxin-2 (fdxA) of Rhodobacter capsulatus (strain ATCC BAA-309 / NBRC 16581 / SB1003).